A 664-amino-acid chain; its full sequence is DNA ligase (664 aa).

Residues 34–38 (DAEYD), 83–84 (SL), and E114 each bind NAD(+). Catalysis depends on K116, which acts as the N6-AMP-lysine intermediate. NAD(+) contacts are provided by R137, E172, K288, and K312. Positions 406, 409, 424, and 429 each coordinate Zn(2+). One can recognise a BRCT domain in the interval 586–664 (VRDNRLEGLT…EEEFRQMVMS (79 aa)).

Belongs to the NAD-dependent DNA ligase family. LigA subfamily. Mg(2+) is required as a cofactor. It depends on Mn(2+) as a cofactor.

The catalysed reaction is NAD(+) + (deoxyribonucleotide)n-3'-hydroxyl + 5'-phospho-(deoxyribonucleotide)m = (deoxyribonucleotide)n+m + AMP + beta-nicotinamide D-nucleotide.. In terms of biological role, DNA ligase that catalyzes the formation of phosphodiester linkages between 5'-phosphoryl and 3'-hydroxyl groups in double-stranded DNA using NAD as a coenzyme and as the energy source for the reaction. It is essential for DNA replication and repair of damaged DNA. This chain is DNA ligase, found in Carboxydothermus hydrogenoformans (strain ATCC BAA-161 / DSM 6008 / Z-2901).